Here is a 95-residue protein sequence, read N- to C-terminus: YcgL domain-containing protein Patl_2802 (95 aa).

Positions 4 to 88 (LLCAVYKSSK…PEENLLKQHL (85 aa)) constitute a YcgL domain.

This Pseudoalteromonas atlantica (strain T6c / ATCC BAA-1087) protein is YcgL domain-containing protein Patl_2802.